The chain runs to 281 residues: Orotidine 5'-phosphate decarboxylase (281 aa).

The active-site Proton donor is the Lys94.

This sequence belongs to the OMP decarboxylase family. Type 2 subfamily.

It carries out the reaction orotidine 5'-phosphate + H(+) = UMP + CO2. It participates in pyrimidine metabolism; UMP biosynthesis via de novo pathway; UMP from orotate: step 2/2. The protein is Orotidine 5'-phosphate decarboxylase of Thermomicrobium roseum (strain ATCC 27502 / DSM 5159 / P-2).